Consider the following 160-residue polypeptide: SsrA-binding protein (160 aa).

It belongs to the SmpB family.

The protein localises to the cytoplasm. In terms of biological role, required for rescue of stalled ribosomes mediated by trans-translation. Binds to transfer-messenger RNA (tmRNA), required for stable association of tmRNA with ribosomes. tmRNA and SmpB together mimic tRNA shape, replacing the anticodon stem-loop with SmpB. tmRNA is encoded by the ssrA gene; the 2 termini fold to resemble tRNA(Ala) and it encodes a 'tag peptide', a short internal open reading frame. During trans-translation Ala-aminoacylated tmRNA acts like a tRNA, entering the A-site of stalled ribosomes, displacing the stalled mRNA. The ribosome then switches to translate the ORF on the tmRNA; the nascent peptide is terminated with the 'tag peptide' encoded by the tmRNA and targeted for degradation. The ribosome is freed to recommence translation, which seems to be the essential function of trans-translation. This Shewanella amazonensis (strain ATCC BAA-1098 / SB2B) protein is SsrA-binding protein.